A 422-amino-acid chain; its full sequence is Inhibitory synaptic factor 2A (422 aa).

The tract at residues 143–163 (FLADSKEKSEAGPMEEPRPCS) is disordered. The span at 146–160 (DSKEKSEAGPMEEPR) shows a compositional bias: basic and acidic residues. Serine 177 bears the Phosphoserine mark. Residues 344-370 (TEVVDLKAQLQVMENLISSSQETIKVL) are a coiled coil.

This sequence belongs to the INSYN2 family. Interacts with GPHN.

It localises to the postsynaptic density. In terms of biological role, component of the protein machinery at the inhibitory synapses, probably acting as a scaffold. Inhibitory synapses dampen neuronal activity through postsynaptic hyperpolarization. This synaptic inhibition is fundamental for the functioning of the central nervous system, shaping and orchestrating the flow of information through neuronal networks to generate a precise neural code. This chain is Inhibitory synaptic factor 2A, found in Mus musculus (Mouse).